A 240-amino-acid polypeptide reads, in one-letter code: MQKTFESKTATSKAVVVFSGGQDSTTCLIQALTQYDEVHGITFDYGQRHREEIEVAKSLAKRLKITSHKVMDVTLLNELAISALTRDAIPVSHELMENGLPNTFVPGRNILFLTLAGIYAYQLGAEAIITGVCETDFSGYPDCRNDFVKAMESALVQGMDKQLKIITPLMWLNKAQTWALADKYQQLDLVRHHTLTCYNGVIGDGCGDCPACHLRKRGLDDYLQNKAAVMAELDASEPKA.

18-28 provides a ligand contact to ATP; that stretch reads FSGGQDSTTCL. Cysteine 197, cysteine 206, cysteine 209, and cysteine 212 together coordinate Zn(2+).

Belongs to the QueC family. It depends on Zn(2+) as a cofactor.

The enzyme catalyses 7-carboxy-7-deazaguanine + NH4(+) + ATP = 7-cyano-7-deazaguanine + ADP + phosphate + H2O + H(+). It functions in the pathway purine metabolism; 7-cyano-7-deazaguanine biosynthesis. Catalyzes the ATP-dependent conversion of 7-carboxy-7-deazaguanine (CDG) to 7-cyano-7-deazaguanine (preQ(0)). The protein is 7-cyano-7-deazaguanine synthase of Shewanella putrefaciens (strain CN-32 / ATCC BAA-453).